The following is a 66-amino-acid chain: Small vasohibin-binding protein (66 aa).

Over residues 1–23 (MDPPARKEKPKVKEPVSRIEKAK) the composition is skewed to basic and acidic residues. A disordered region spans residues 1 to 32 (MDPPARKEKPKVKEPVSRIEKAKQKSAQQELK). A coiled-coil region spans residues 5-52 (ARKEKPKVKEPVSRIEKAKQKSAQQELKQRQRAEIYALNRVMTELEQQ).

This sequence belongs to the SVBP family. As to quaternary structure, interacts with VASH1 and VASH2.

It is found in the cytoplasm. It localises to the secreted. The protein resides in the cytoskeleton. Functionally, enhances the tyrosine carboxypeptidase activity of VASH1 and VASH2, thereby promoting the removal of the C-terminal tyrosine residue of alpha-tubulin. Also required to enhance the solubility and secretion of VASH1 and VASH2. Plays a role in axon and excitatory synapse formation. The protein is Small vasohibin-binding protein of Bos taurus (Bovine).